The sequence spans 155 residues: Ribonuclease H (155 aa).

The region spanning 4–145 is the RNase H type-1 domain; that stretch reads TEPTVYAYTD…ADRLANRGID (142 aa). Residues aspartate 13, glutamate 51, aspartate 73, and aspartate 137 each coordinate Mg(2+).

Belongs to the RNase H family. In terms of assembly, monomer. It depends on Mg(2+) as a cofactor.

It is found in the cytoplasm. The catalysed reaction is Endonucleolytic cleavage to 5'-phosphomonoester.. Functionally, endonuclease that specifically degrades the RNA of RNA-DNA hybrids. The polypeptide is Ribonuclease H (Methylococcus capsulatus (strain ATCC 33009 / NCIMB 11132 / Bath)).